Consider the following 449-residue polypeptide: MKEKKPRLFGTSGIRGRFGEKVTLELTAEHRKALATHLGGDGEVVVGYDTRTSSQLLENALIAGIVECGCDVTRLGMVPTPLVGYAASRLGAAAGVMITASHNPAPYNGIKLWNPDGMAYRPSQERVIESIIHSRDFKRKAWDELGSITTVDMRDDYVRAVLETVEIKKPLKVVIDSGCGAASHLSPLIFRKAGCRVITLNSQPDGFFPGRDPEPVPENLSELMETVRSTGADLGIAHDGDADRMVAIDDQGRFASFDKLLALMAREIGGKIITTVDASLCVDECLGDRGEVIRTRVGDVHVANTIAEEGARFGGEPSGTWLHPDFCMCPDGILSALRVAELVSARGPLSELLEEVPSYPNIRDKVPCPDEKKDIIMERVAAELSDQFSETSDINTIDGVRISLDDGSWVLVRPSGTEPYIRITLEGKTEEKARYIHERTRGYLENVIG.

S101 (phosphoserine intermediate) is an active-site residue. S101, D239, D241, and D243 together coordinate Mg(2+). S101 carries the phosphoserine modification.

Belongs to the phosphohexose mutase family. It depends on Mg(2+) as a cofactor. In terms of processing, activated by phosphorylation.

The catalysed reaction is alpha-D-glucosamine 1-phosphate = D-glucosamine 6-phosphate. In terms of biological role, catalyzes the conversion of glucosamine-6-phosphate to glucosamine-1-phosphate. This Methanothermobacter thermautotrophicus (strain ATCC 29096 / DSM 1053 / JCM 10044 / NBRC 100330 / Delta H) (Methanobacterium thermoautotrophicum) protein is Probable phosphoglucosamine mutase.